The sequence spans 406 residues: Acetate kinase (406 aa).

Asparagine 10 lines the Mg(2+) pocket. Lysine 17 provides a ligand contact to ATP. A substrate-binding site is contributed by arginine 92. Residue aspartate 151 is the Proton donor/acceptor of the active site. ATP contacts are provided by residues 211 to 215 (HLGSG), 286 to 288 (DFR), and 335 to 339 (GIGEN). Glutamate 389 is a Mg(2+) binding site.

Belongs to the acetokinase family. In terms of assembly, homodimer. Mg(2+) serves as cofactor. Mn(2+) is required as a cofactor.

The protein localises to the cytoplasm. It catalyses the reaction acetate + ATP = acetyl phosphate + ADP. It functions in the pathway metabolic intermediate biosynthesis; acetyl-CoA biosynthesis; acetyl-CoA from acetate: step 1/2. In terms of biological role, catalyzes the formation of acetyl phosphate from acetate and ATP. Can also catalyze the reverse reaction. The chain is Acetate kinase from Buchnera aphidicola subsp. Cinara cedri (strain Cc).